Consider the following 122-residue polypeptide: Large ribosomal subunit protein uL14 (122 aa).

The protein belongs to the universal ribosomal protein uL14 family. Part of the 50S ribosomal subunit. Forms a cluster with proteins L3 and L19. In the 70S ribosome, L14 and L19 interact and together make contacts with the 16S rRNA in bridges B5 and B8.

Binds to 23S rRNA. Forms part of two intersubunit bridges in the 70S ribosome. This Orientia tsutsugamushi (strain Boryong) (Rickettsia tsutsugamushi) protein is Large ribosomal subunit protein uL14.